A 51-amino-acid chain; its full sequence is Sperm protamine P1 (51 aa).

Belongs to the protamine P1 family. Testis.

The protein localises to the nucleus. The protein resides in the chromosome. Its function is as follows. Protamines substitute for histones in the chromatin of sperm during the haploid phase of spermatogenesis. They compact sperm DNA into a highly condensed, stable and inactive complex. This chain is Sperm protamine P1 (PRM1), found in Piliocolobus badius (Western red colobus).